A 248-amino-acid chain; its full sequence is CKLF-like MARVEL transmembrane domain-containing protein 2 (248 aa).

The disordered stretch occupies residues 1–63 (MAPKAAKGAK…KAVQPKHEVG (63 aa)). Residues 12-22 (EPAPAPPPPGA) show a composition bias toward pro residues. Residues 23–63 (KPEEDKKDGKEPSDKPQKAVQDHKEPSDKPQKAVQPKHEVG) show a composition bias toward basic and acidic residues. Positions 82-204 (FWLLGHAEIK…DVCLQRNHFR (123 aa)) constitute an MARVEL domain. A run of 3 helical transmembrane segments spans residues 116-136 (LIITMEISFFSFFILLYSFAI), 147-167 (ISDLFNDLIACAFLVGAVVFA), and 178-198 (YLLAVILIGAAGVFAFIDVCL). The segment at 208-248 (AKKHMLVPPPGKEKGPQQGKGPEPAKPPEPGKPPGPAKGKK) is disordered. Residues 231-248 (PAKPPEPGKPPGPAKGKK) show a composition bias toward pro residues.

It belongs to the chemokine-like factor family. In terms of tissue distribution, highly expressed in testis.

It localises to the membrane. The sequence is that of CKLF-like MARVEL transmembrane domain-containing protein 2 (CMTM2) from Homo sapiens (Human).